The chain runs to 517 residues: Methionine aminopeptidase 1b (517 aa).

The interval 74 to 94 (YCNKENSNNNNNNNNNNNNNL) is disordered. A compositionally biased stretch (low complexity) spans 79–94 (NSNNNNNNNNNNNNNL). The segment at 114–166 (ENLCSGCKKVLIKKLSCPICLKNKIFSYFCNQECFKGSWKEHQKIHENMNKEN) adopts a C6H2-type zinc-finger fold. Residues Cys117, Cys120, Cys130, Cys133, Cys143, Cys147, His155, and His159 each contribute to the Zn(2+) site. His325 is a binding site for a protein. Zn(2+) is bound by residues Asp342, Asp353, and His419. His426 contributes to the a protein binding site. 2 residues coordinate Zn(2+): Glu452 and Glu483.

This sequence belongs to the peptidase M24A family. Methionine aminopeptidase type 1 subfamily. As to quaternary structure, associates with the 60S ribosomal subunit of the 80S translational complex. Zn(2+) is required as a cofactor. It depends on Co(2+) as a cofactor. Mn(2+) serves as cofactor. The cofactor is Fe(2+).

Its subcellular location is the cytoplasm. The catalysed reaction is Release of N-terminal amino acids, preferentially methionine, from peptides and arylamides.. Its activity is regulated as follows. Inhibited by pyrimidine derivative XC11. Functionally, cotranslationally removes the N-terminal methionine from nascent proteins. The N-terminal methionine is often cleaved when the second residue in the primary sequence is small and uncharged (Met-Ala-, Cys, Gly, Pro, Ser, Thr, or Val). May play an important role in parasite growth during the blood asexual stage. The protein is Methionine aminopeptidase 1b of Plasmodium falciparum (isolate 3D7).